The chain runs to 90 residues: MPKARVTKNETAPVSSNPSANRTPVKINSAGTPMWYKVIMFAFMIVGLAWLIVNYLVGPQIPFMADLGAWNYGIGFGLMIIGLLMTMGWR.

The segment at 1–25 (MPKARVTKNETAPVSSNPSANRTPV) is disordered. Residues 9 to 22 (NETAPVSSNPSANR) are compositionally biased toward polar residues. 2 helical membrane-spanning segments follow: residues 38–58 (VIMFAFMIVGLAWLIVNYLVG) and 67–87 (LGAWNYGIGFGLMIIGLLMTM).

Belongs to the CrgA family.

It is found in the cell membrane. Functionally, involved in cell division. This is Cell division protein CrgA from Corynebacterium glutamicum (strain R).